A 178-amino-acid polypeptide reads, in one-letter code: uncharacterized protein (178 aa).

Residues 7–29 form a helical membrane-spanning segment; it reads FFVIFSILWGSLFLFSIIGSLGT.

The protein resides in the membrane. This is an uncharacterized protein from Bacillus subtilis (strain 168).